A 233-amino-acid chain; its full sequence is Small ribosomal subunit protein uS3 (233 aa).

Positions 39-107 (VRQYLTKELA…PAQINIAEVR (69 aa)) constitute a KH type-2 domain.

The protein belongs to the universal ribosomal protein uS3 family. Part of the 30S ribosomal subunit. Forms a tight complex with proteins S10 and S14.

Its function is as follows. Binds the lower part of the 30S subunit head. Binds mRNA in the 70S ribosome, positioning it for translation. The chain is Small ribosomal subunit protein uS3 from Citrobacter koseri (strain ATCC BAA-895 / CDC 4225-83 / SGSC4696).